The primary structure comprises 465 residues: CCA-adding enzyme (465 aa).

ATP-binding residues include S63 and K66. CTP is bound by residues S63 and K66. Residues E75, D77, and D127 each coordinate Mg(2+). ATP-binding residues include H149, K171, and Y180. CTP contacts are provided by H149, K171, and Y180.

Belongs to the tRNA nucleotidyltransferase/poly(A) polymerase family. Archaeal CCA-adding enzyme subfamily. In terms of assembly, homodimer. Mg(2+) is required as a cofactor.

The enzyme catalyses a tRNA precursor + 2 CTP + ATP = a tRNA with a 3' CCA end + 3 diphosphate. The catalysed reaction is a tRNA with a 3' CCA end + 2 CTP + ATP = a tRNA with a 3' CCACCA end + 3 diphosphate. Its function is as follows. Catalyzes the addition and repair of the essential 3'-terminal CCA sequence in tRNAs without using a nucleic acid template. Adds these three nucleotides in the order of C, C, and A to the tRNA nucleotide-73, using CTP and ATP as substrates and producing inorganic pyrophosphate. tRNA 3'-terminal CCA addition is required both for tRNA processing and repair. Also involved in tRNA surveillance by mediating tandem CCA addition to generate a CCACCA at the 3' terminus of unstable tRNAs. While stable tRNAs receive only 3'-terminal CCA, unstable tRNAs are marked with CCACCA and rapidly degraded. In Aeropyrum pernix (strain ATCC 700893 / DSM 11879 / JCM 9820 / NBRC 100138 / K1), this protein is CCA-adding enzyme.